The chain runs to 519 residues: Probable FAD synthase (519 aa).

The tract at residues 17–108 is molybdenum cofactor biosynthesis protein-like; sequence AILVIGDEIL…TDQMQFSDEI (92 aa). The interval 328–485 is FAD synthase; sequence QIALSFNGGK…SLGGRDNTVK (158 aa).

In the N-terminal section; belongs to the MoaB/Mog family. It in the C-terminal section; belongs to the PAPS reductase family. FAD1 subfamily. It depends on Mg(2+) as a cofactor.

The catalysed reaction is FMN + ATP + H(+) = FAD + diphosphate. It participates in cofactor biosynthesis; FAD biosynthesis; FAD from FMN: step 1/1. Functionally, catalyzes the adenylation of flavin mononucleotide (FMN) to form flavin adenine dinucleotide (FAD) coenzyme. The protein is Probable FAD synthase of Caenorhabditis elegans.